Here is a 106-residue protein sequence, read N- to C-terminus: Urease subunit beta (106 aa).

The protein belongs to the urease beta subunit family. In terms of assembly, heterotrimer of UreA (gamma), UreB (beta) and UreC (alpha) subunits. Three heterotrimers associate to form the active enzyme.

It localises to the cytoplasm. It catalyses the reaction urea + 2 H2O + H(+) = hydrogencarbonate + 2 NH4(+). The protein operates within nitrogen metabolism; urea degradation; CO(2) and NH(3) from urea (urease route): step 1/1. The chain is Urease subunit beta from Synechococcus sp. (strain CC9311).